We begin with the raw amino-acid sequence, 502 residues long: Serine carboxypeptidase-like 40 (502 aa).

An N-terminal signal peptide occupies residues 1–24 (MRKGQGYSYSVIASVLVLLCVVVS). Asn103 and Asn187 each carry an N-linked (GlcNAc...) asparagine glycan. 3 cysteine pairs are disulfide-bonded: Cys136–Cys384, Cys293–Cys307, and Cys331–Cys352. Ser229 is an active-site residue. Residues Asn333 and Asn373 are each glycosylated (N-linked (GlcNAc...) asparagine). The active site involves Asp420. Asn436 carries an N-linked (GlcNAc...) asparagine glycan. The active site involves His473.

The protein belongs to the peptidase S10 family. As to expression, expressed in roots, leaves, flowers and siliques.

It is found in the secreted. Probable carboxypeptidase. This chain is Serine carboxypeptidase-like 40 (SCPL40), found in Arabidopsis thaliana (Mouse-ear cress).